The following is a 358-amino-acid chain: Neutral protease 2 homolog PADG_00776 (358 aa).

The first 19 residues, 1 to 19, serve as a signal peptide directing secretion; sequence MRRVSGILAVAAFTISAFA. Positions 20–185 are excised as a propeptide; the sequence is GVIQPVAKDA…MNQFVKIAKL (166 aa). Intrachain disulfides connect cysteine 188-cysteine 259 and cysteine 266-cysteine 284. N-linked (GlcNAc...) asparagine glycosylation occurs at asparagine 249. A Zn(2+)-binding site is contributed by histidine 309. The active site involves glutamate 310. The Zn(2+) site is built by histidine 313 and aspartate 324.

Belongs to the peptidase M35 family. Zn(2+) is required as a cofactor.

Its subcellular location is the secreted. The enzyme catalyses Preferential cleavage of bonds with hydrophobic residues in P1'. Also 3-Asn-|-Gln-4 and 8-Gly-|-Ser-9 bonds in insulin B chain.. Secreted metalloproteinase that allows assimilation of proteinaceous substrates. Shows high activities on basic nuclear substrates such as histone and protamine. The sequence is that of Neutral protease 2 homolog PADG_00776 from Paracoccidioides brasiliensis (strain Pb18).